Reading from the N-terminus, the 498-residue chain is Putative antiporter subunit mnhD2 (498 aa).

14 helical membrane passes run 2 to 22 (LSNL…ILVF), 32 to 52 (YLYL…LIYV), 78 to 98 (LSLI…AYGF), 108 to 128 (YHLP…FLTS), 130 to 150 (LFNL…LITL), 161 to 181 (IIYV…IGLL), 209 to 229 (ISLI…FMWL), 240 to 260 (LAAL…IRFF), 271 to 291 (IHPL…IGVI), 308 to 328 (IGFI…GAIF), 330 to 350 (LVND…LVYI), 369 to 389 (FGVA…FSGF), 406 to 426 (IGLA…FRIF), and 451 to 471 (ILSI…VVLN).

The protein belongs to the CPA3 antiporters (TC 2.A.63) subunit D family. May form a heterooligomeric complex that consists of seven subunits: mnhA2, mnhB2, mnhC2, mnhD2, mnhE2, mnhF2 and mnhG2.

Its subcellular location is the cell membrane. The protein is Putative antiporter subunit mnhD2 (mnhD2) of Staphylococcus aureus (strain Mu3 / ATCC 700698).